Here is a 96-residue protein sequence, read N- to C-terminus: Small ribosomal subunit protein uS15 (96 aa).

This sequence belongs to the universal ribosomal protein uS15 family. In terms of assembly, part of the 30S ribosomal subunit. Forms a bridge to the 50S subunit in the 70S ribosome, contacting the 23S rRNA.

One of the primary rRNA binding proteins, it binds directly to 16S rRNA where it helps nucleate assembly of the platform of the 30S subunit by binding and bridging several RNA helices of the 16S rRNA. Functionally, forms an intersubunit bridge (bridge B4) with the 23S rRNA of the 50S subunit in the ribosome. The polypeptide is Small ribosomal subunit protein uS15 (Streptomyces griseus subsp. griseus (strain JCM 4626 / CBS 651.72 / NBRC 13350 / KCC S-0626 / ISP 5235)).